The following is an 864-amino-acid chain: MHERYVPADVEAAAQGDWRAADAYKTQEDSQKPKFYCVSMLPYPSGKLHMGHVRNYTINDVMYRYLRMNGYNTLMPMGWDAFGMPAENAAMANGVPPAKWTYDNIDYMKGQMQSMGLAIDWSREIATCKPDYYKWNQWLFLKMLEKGIAYKKTGTVNWDPVDQTVLANEQVIDGRGWRSGALVEKREIPMYYLRITQYADELLNDLDGLGWPERVKIMQQNWIGKSFGVNFGFPYELDGEKKLLRVFTTRADTIMGVTFCAIAAEHPLATRLAQDKPELLTFIDECKRGGVAEADVATMEKKGVATGFSVAHPLTGEPVEVWIGNYVLMSYGEGAVMGVPGHDERDFAFAKKYDLPIKQVISAEGQQYSLDAWQEWYGDKETAVCVNSGKYDGLRYAEAVDAVAADLNAGGFGDKQVTWRLRDWGVSRQRYWGTPIPIIHCPSCGDVPVPEQDLPVVLPEDLVPDGSGNPLAKSEAFLNCACPKCGAAAKRETDTMDTFVDSSWYFSRYTAPDAETMVDARTDYWMPMDQYIGGIEHAILHLLYSRFWTKVMRDLGLVKFGEPAKNLLTQGMVLNETFYREDASGKKTWYNPLDVTVTHDDKGRPVGATLNTDGQPVVLGGIEKMSKSKNNGVDPQLLIDQYGADTARLFTMFAAPPEQQLEWSGAGVEGASRFLRRVWSFGAANREALAARAGFDAAALGEADKALRREIYSVLKQADFDYQRLQYNTVVSAAMKMLNAIDGAKGATPGVLRETYGVLLRVLYPVVPHVTFELWKALGYADEFGPLLDAPWPKVDEAALEQAEIELVLQVNGKVRGALKVAKDASREAIEAAAVADDAFAKFSDGKPAKKIVVVPGRLVNIVV.

The short motif at P42 to H52 is the 'HIGH' region element. A 'KMSKS' region motif is present at residues K624–S628. K627 is an ATP binding site.

It belongs to the class-I aminoacyl-tRNA synthetase family.

It localises to the cytoplasm. It catalyses the reaction tRNA(Leu) + L-leucine + ATP = L-leucyl-tRNA(Leu) + AMP + diphosphate. The chain is Leucine--tRNA ligase from Burkholderia lata (strain ATCC 17760 / DSM 23089 / LMG 22485 / NCIMB 9086 / R18194 / 383).